The sequence spans 309 residues: Cytochrome c biogenesis protein CcsA (309 aa).

8 consecutive transmembrane segments (helical) span residues 18-38 (LGIL…GAVF), 43-63 (FFIV…QLLF), 67-87 (ISGH…AWGI), 102-122 (IIPS…CFVL), 148-168 (VMLS…VLFI), 216-236 (SILI…VWAN), 250-267 (TWAF…HMRI), and 279-299 (LATS…FLGI).

The protein belongs to the CcmF/CycK/Ccl1/NrfE/CcsA family. May interact with ccs1.

The protein resides in the cellular thylakoid membrane. In terms of biological role, required during biogenesis of c-type cytochromes (cytochrome c6 and cytochrome f) at the step of heme attachment. This Prochlorococcus marinus (strain MIT 9312) protein is Cytochrome c biogenesis protein CcsA.